Here is a 369-residue protein sequence, read N- to C-terminus: Ubiquitin-conjugating enzyme E2 Q2 (369 aa).

A disordered region spans residues 117–143 (DQPLPTGQNGTTEEVTSEEEEEEEMAE). The span at 131–143 (VTSEEEEEEEMAE) shows a compositional bias: acidic residues. In terms of domain architecture, UBC core spans 198–362 (QASDRLMKEL…VQIHEKNGWY (165 aa)). The active-site Glycyl thioester intermediate is the Cys298.

This sequence belongs to the ubiquitin-conjugating enzyme family. In terms of processing, auto-ubiquitinated in vitro. In terms of tissue distribution, detected at embryo implantation sites in the luminal epithelium of pregnant endometrium. Detected at low levels in ovary and liver.

It is found in the cytoplasm. It carries out the reaction S-ubiquitinyl-[E1 ubiquitin-activating enzyme]-L-cysteine + [E2 ubiquitin-conjugating enzyme]-L-cysteine = [E1 ubiquitin-activating enzyme]-L-cysteine + S-ubiquitinyl-[E2 ubiquitin-conjugating enzyme]-L-cysteine.. Its pathway is protein modification; protein ubiquitination. Accepts ubiquitin from the E1 complex and catalyzes its covalent attachment to other proteins. In vitro catalyzes 'Lys-48'-linked polyubiquitination. In Oryctolagus cuniculus (Rabbit), this protein is Ubiquitin-conjugating enzyme E2 Q2 (UBE2Q2).